The primary structure comprises 359 residues: Transcription factor MYB115 (359 aa).

Residues 1 to 17 (MYHQNLISSTPNQNSNP) show a composition bias toward polar residues. The interval 1-21 (MYHQNLISSTPNQNSNPHDWD) is disordered. 2 HTH myb-type domains span residues 153-208 (KDII…RPNI) and 209-259 (KKND…RRLH). 2 consecutive DNA-binding regions (H-T-H motif) follow at residues 181–204 (WTSI…HNHL) and 232–255 (WTEI…NATK).

In terms of tissue distribution, accumulates in reproductive organs (e.g. flowers and siliques). Expressed at very low levels in vegetative organs.

The protein resides in the nucleus. Transcription activator that recognizes the motif 5'-TAACGG-3' in the promoter of target genes. Promotes vegetative-to-embryonic transition and the formation of somatic embryos from root explants in a WUS-independent manner. Together with MYB118, activates the transcription of S-ACP-DES2/AAD2 and S-ACP-DES3/AAD3 thus promoting the biosynthesis of omega-7 monounsaturated fatty acid in seed endosperm. This Arabidopsis thaliana (Mouse-ear cress) protein is Transcription factor MYB115.